A 145-amino-acid chain; its full sequence is MQEVIIYSDGACKGNPGRGGWGAVLVAGTNEKELFGGEANTTNNRMEMTAVIEALRALKRPCTVQVYTDSQYVQKGISEWLPGWKARGWKTADKKPVKNADLWQELDTLVQPHKITWHWVRGHNGHPGNERADALANRGVASLAS.

The region spanning 1–141 (MQEVIIYSDG…ADALANRGVA (141 aa)) is the RNase H type-1 domain. Asp9, Glu47, Asp69, and Asp133 together coordinate Mg(2+).

The protein belongs to the RNase H family. Monomer. Requires Mg(2+) as cofactor.

Its subcellular location is the cytoplasm. The enzyme catalyses Endonucleolytic cleavage to 5'-phosphomonoester.. Functionally, endonuclease that specifically degrades the RNA of RNA-DNA hybrids. The polypeptide is Ribonuclease H (Cupriavidus pinatubonensis (strain JMP 134 / LMG 1197) (Cupriavidus necator (strain JMP 134))).